Consider the following 415-residue polypeptide: MTPPQKSKPKRNRRKIYKILPQNQCPSVCQICRNPAIGYHYEVPSCNGCKTFFRRTIITGRKFKCFKVSNCLDGNDVIDTSKRVCRACRFEKCVQAGMNPMAIQAEAKTDEGEELKKLIAKKFENGEKLNDGTVFFNVHDRLNQILGKLIKIETKLEKVHDNGMPMGFLDQRDLSTALSSKVIYNNMEIPSMSYTPVKISKNTGLPKRRSRNFVHSSCLASIEYSKTFDFSSAIDISSKIILLKNTALSCANLTNAYTTFRKLKSDTLLYPDGSIYGPPRRKNGPLIEKQRSFLQNTLISFMTNNVDKTEYILLKAIVLCNPAIIDLPYADSKHIQREREVYAQCLFRYCLLQHGTLHGPARFSALLSIFNVLENQQKEQKDYYLYIKLIHSQKHKDPEVLKKKCISVIYDQIMD.

A DNA-binding region (nuclear receptor) is located at residues 26-105 (PSVCQICRNP…AGMNPMAIQA (80 aa)). NR C4-type zinc fingers lie at residues 29-49 (CQIC…CNGC) and 65-88 (CFKV…CRAC). Positions 170–406 (DQRDLSTALS…DPEVLKKKCI (237 aa)) constitute an NR LBD domain.

It belongs to the nuclear hormone receptor family.

The protein localises to the nucleus. In terms of biological role, orphan nuclear receptor. This chain is Nuclear hormone receptor family member nhr-153 (nhr-153), found in Caenorhabditis elegans.